The following is a 366-amino-acid chain: Aminomethyltransferase (366 aa).

Belongs to the GcvT family. The glycine cleavage system is composed of four proteins: P, T, L and H.

The enzyme catalyses N(6)-[(R)-S(8)-aminomethyldihydrolipoyl]-L-lysyl-[protein] + (6S)-5,6,7,8-tetrahydrofolate = N(6)-[(R)-dihydrolipoyl]-L-lysyl-[protein] + (6R)-5,10-methylene-5,6,7,8-tetrahydrofolate + NH4(+). Its function is as follows. The glycine cleavage system catalyzes the degradation of glycine. The protein is Aminomethyltransferase of Bacillus cereus (strain G9842).